We begin with the raw amino-acid sequence, 561 residues long: Dihydroxy-acid dehydratase (561 aa).

Cys50 lines the [2Fe-2S] cluster pocket. Residue Asp82 coordinates Mg(2+). A [2Fe-2S] cluster-binding site is contributed by Cys123. Residues Asp124 and Lys125 each coordinate Mg(2+). Lys125 carries the N6-carboxylysine modification. [2Fe-2S] cluster is bound at residue Cys195. Glu447 is a Mg(2+) binding site. Ser473 serves as the catalytic Proton acceptor.

It belongs to the IlvD/Edd family. As to quaternary structure, homodimer. Requires [2Fe-2S] cluster as cofactor. Mg(2+) is required as a cofactor.

The catalysed reaction is (2R)-2,3-dihydroxy-3-methylbutanoate = 3-methyl-2-oxobutanoate + H2O. It catalyses the reaction (2R,3R)-2,3-dihydroxy-3-methylpentanoate = (S)-3-methyl-2-oxopentanoate + H2O. It participates in amino-acid biosynthesis; L-isoleucine biosynthesis; L-isoleucine from 2-oxobutanoate: step 3/4. The protein operates within amino-acid biosynthesis; L-valine biosynthesis; L-valine from pyruvate: step 3/4. Functions in the biosynthesis of branched-chain amino acids. Catalyzes the dehydration of (2R,3R)-2,3-dihydroxy-3-methylpentanoate (2,3-dihydroxy-3-methylvalerate) into 2-oxo-3-methylpentanoate (2-oxo-3-methylvalerate) and of (2R)-2,3-dihydroxy-3-methylbutanoate (2,3-dihydroxyisovalerate) into 2-oxo-3-methylbutanoate (2-oxoisovalerate), the penultimate precursor to L-isoleucine and L-valine, respectively. The chain is Dihydroxy-acid dehydratase from Acaryochloris marina (strain MBIC 11017).